The following is a 447-amino-acid chain: Tubulin beta chain (447 aa).

GTP contacts are provided by glutamine 11, glutamate 69, serine 138, glycine 142, threonine 143, glycine 144, asparagine 204, and asparagine 226. Glutamate 69 contributes to the Mg(2+) binding site. Residues 424 to 447 (QYQEARSTDSDEYDNEEYYNQQEE) form a disordered region. Residues 433–447 (SDEYDNEEYYNQQEE) show a composition bias toward acidic residues.

This sequence belongs to the tubulin family. In terms of assembly, dimer of alpha and beta chains. A typical microtubule is a hollow water-filled tube with an outer diameter of 25 nm and an inner diameter of 15 nM. Alpha-beta heterodimers associate head-to-tail to form protofilaments running lengthwise along the microtubule wall with the beta-tubulin subunit facing the microtubule plus end conferring a structural polarity. Microtubules usually have 13 protofilaments but different protofilament numbers can be found in some organisms and specialized cells. Mg(2+) serves as cofactor. Lens specific.

It is found in the cytoplasm. Its subcellular location is the cytoskeleton. In terms of biological role, tubulin is the major constituent of microtubules, a cylinder consisting of laterally associated linear protofilaments composed of alpha- and beta-tubulin heterodimers. Microtubules grow by the addition of GTP-tubulin dimers to the microtubule end, where a stabilizing cap forms. Below the cap, tubulin dimers are in GDP-bound state, owing to GTPase activity of alpha-tubulin. In Enteroctopus dofleini (North Pacific giant octopus), this protein is Tubulin beta chain.